Here is a 380-residue protein sequence, read N- to C-terminus: Chaperone protein DnaJ (380 aa).

The 66-residue stretch at Asp5–Gly70 folds into the J domain. The CR-type zinc finger occupies Gly135–Thr213. The Zn(2+) site is built by Cys148, Cys151, Cys165, Cys168, Cys187, Cys190, Cys201, and Cys204. CXXCXGXG motif repeat units follow at residues Cys148–Gly155, Cys165–Gly172, Cys187–Gly194, and Cys201–Gly208.

Belongs to the DnaJ family. In terms of assembly, homodimer. Zn(2+) serves as cofactor.

The protein resides in the cytoplasm. In terms of biological role, participates actively in the response to hyperosmotic and heat shock by preventing the aggregation of stress-denatured proteins and by disaggregating proteins, also in an autonomous, DnaK-independent fashion. Unfolded proteins bind initially to DnaJ; upon interaction with the DnaJ-bound protein, DnaK hydrolyzes its bound ATP, resulting in the formation of a stable complex. GrpE releases ADP from DnaK; ATP binding to DnaK triggers the release of the substrate protein, thus completing the reaction cycle. Several rounds of ATP-dependent interactions between DnaJ, DnaK and GrpE are required for fully efficient folding. Also involved, together with DnaK and GrpE, in the DNA replication of plasmids through activation of initiation proteins. The chain is Chaperone protein DnaJ from Aeromonas salmonicida (strain A449).